The sequence spans 201 residues: Large ribosomal subunit protein uL4 (201 aa).

The tract at residues 44–71 is disordered; it reads RAQKTRAEVTGSGKKPWRQKGTGRARSG.

Belongs to the universal ribosomal protein uL4 family. In terms of assembly, part of the 50S ribosomal subunit.

Functionally, one of the primary rRNA binding proteins, this protein initially binds near the 5'-end of the 23S rRNA. It is important during the early stages of 50S assembly. It makes multiple contacts with different domains of the 23S rRNA in the assembled 50S subunit and ribosome. Its function is as follows. Forms part of the polypeptide exit tunnel. This chain is Large ribosomal subunit protein uL4, found in Edwardsiella ictaluri (strain 93-146).